Here is a 312-residue protein sequence, read N- to C-terminus: Ribosomal RNA small subunit methyltransferase H (312 aa).

Residues 34 to 36, aspartate 54, phenylalanine 78, aspartate 100, and glutamine 107 contribute to the S-adenosyl-L-methionine site; that span reads GGH.

Belongs to the methyltransferase superfamily. RsmH family.

The protein localises to the cytoplasm. It catalyses the reaction cytidine(1402) in 16S rRNA + S-adenosyl-L-methionine = N(4)-methylcytidine(1402) in 16S rRNA + S-adenosyl-L-homocysteine + H(+). In terms of biological role, specifically methylates the N4 position of cytidine in position 1402 (C1402) of 16S rRNA. The sequence is that of Ribosomal RNA small subunit methyltransferase H from Salmonella choleraesuis (strain SC-B67).